The sequence spans 213 residues: Small ribosomal subunit protein eS1 (213 aa).

The protein belongs to the eukaryotic ribosomal protein eS1 family.

The polypeptide is Small ribosomal subunit protein eS1 (Desulfurococcus amylolyticus (strain DSM 18924 / JCM 16383 / VKM B-2413 / 1221n) (Desulfurococcus kamchatkensis)).